Reading from the N-terminus, the 386-residue chain is Erythronate-4-phosphate dehydrogenase (386 aa).

Substrate is bound by residues S59 and T81. NAD(+) is bound at residue D162. R239 is a catalytic residue. An NAD(+)-binding site is contributed by D262. E267 is a catalytic residue. H284 functions as the Proton donor in the catalytic mechanism. G287 is an NAD(+) binding site. Position 288 (Y288) interacts with substrate.

This sequence belongs to the D-isomer specific 2-hydroxyacid dehydrogenase family. PdxB subfamily. Homodimer.

It is found in the cytoplasm. The catalysed reaction is 4-phospho-D-erythronate + NAD(+) = (R)-3-hydroxy-2-oxo-4-phosphooxybutanoate + NADH + H(+). Its pathway is cofactor biosynthesis; pyridoxine 5'-phosphate biosynthesis; pyridoxine 5'-phosphate from D-erythrose 4-phosphate: step 2/5. Catalyzes the oxidation of erythronate-4-phosphate to 3-hydroxy-2-oxo-4-phosphonooxybutanoate. The protein is Erythronate-4-phosphate dehydrogenase of Psychrobacter cryohalolentis (strain ATCC BAA-1226 / DSM 17306 / VKM B-2378 / K5).